The following is a 341-amino-acid chain: Phenylalanine--tRNA ligase alpha subunit (341 aa).

Residue Glu-255 participates in Mg(2+) binding.

This sequence belongs to the class-II aminoacyl-tRNA synthetase family. Phe-tRNA synthetase alpha subunit type 1 subfamily. Tetramer of two alpha and two beta subunits. It depends on Mg(2+) as a cofactor.

The protein localises to the cytoplasm. It carries out the reaction tRNA(Phe) + L-phenylalanine + ATP = L-phenylalanyl-tRNA(Phe) + AMP + diphosphate + H(+). This is Phenylalanine--tRNA ligase alpha subunit from Natranaerobius thermophilus (strain ATCC BAA-1301 / DSM 18059 / JW/NM-WN-LF).